Here is a 33-residue protein sequence, read N- to C-terminus: Mu-theraphotoxin-Tp1a (33 aa).

Cystine bridges form between Cys2/Cys17, Cys9/Cys22, and Cys16/Cys29. An Isoleucine amide modification is found at Ile33.

Belongs to the neurotoxin 10 (Hwtx-1) family. 55 (ProTx-III) subfamily. Expressed by the venom gland.

The protein localises to the secreted. Inhibits voltage-gated sodium channels without significantly altering the voltage dependence of activation or inactivation. Preferentially inhibits human Nav1.7/SCN9A (IC(50)=2.1 nM) &gt; human Nav1.6/SCN8A &gt; human Nav1.2/SCN2A &gt; human Nav1.1/SCN1A &gt; human Nav1.3/SCN3A channels. Exhibits analgesic properties by reversing spontaneous pain induced in mice by intraplantar injection with OD1 (AC P84646), a scorpion toxin that potentiates human Nav1.7/SCN9A. The protein is Mu-theraphotoxin-Tp1a of Thrixopelma pruriens (Peruvian green velvet tarantula).